A 333-amino-acid polypeptide reads, in one-letter code: Electron transfer flavoprotein subunit alpha, mitochondrial (333 aa).

The N-terminal 19 residues, 1–19, are a transit peptide targeting the mitochondrion; it reads MFRAAAPGQLRRAASSLRF. The domain I stretch occupies residues 20–204; the sequence is QSTLVIAEHA…EISEWLDQKL (185 aa). At Lys59 the chain carries N6-acetyllysine; alternate. At Lys59 the chain carries N6-succinyllysine; alternate. Lys62 is modified (N6-acetyllysine). Lys69 carries the N6-acetyllysine; alternate modification. Position 69 is an N6-succinyllysine; alternate (Lys69). Lys75 is subject to N6-acetyllysine. Position 93 is a phosphothreonine (Thr93). N6-acetyllysine occurs at positions 101 and 139. Ser140 is subject to Phosphoserine. Lys158 carries the N6-acetyllysine; alternate modification. The residue at position 158 (Lys158) is an N6-succinyllysine; alternate. Lys164 bears the N6-acetyllysine mark. Lys187 carries the N6-succinyllysine modification. Lys203 is modified (N6-acetyllysine; alternate). Lys203 bears the N6-succinyllysine; alternate mark. The segment at 205–333 is domain II; the sequence is TKSDRPELTG…PEMTEILKKK (129 aa). Lys216 carries the post-translational modification N6-succinyllysine. Residue Arg223 coordinates FAD. N6-acetyllysine; alternate is present on residues Lys226 and Lys232. Residues Lys226 and Lys232 each carry the N6-succinyllysine; alternate modification. Residues Ser248, 263–266, 281–286, and Asn300 contribute to the FAD site; these read VGQT and SGAIQH. Residue Lys301 is modified to N6-succinyllysine. 318–319 is a binding site for FAD; sequence DL.

It belongs to the ETF alpha-subunit/FixB family. As to quaternary structure, heterodimer composed of ETFA and ETFB. Identified in a complex that contains ETFA, ETFB and ETFRF1. Interaction with ETFRF1 promotes dissociation of the bound FAD and loss of electron transfer activity. Interacts with TASOR. It depends on FAD as a cofactor.

It is found in the mitochondrion matrix. In terms of biological role, heterodimeric electron transfer flavoprotein that accepts electrons from several mitochondrial dehydrogenases, including acyl-CoA dehydrogenases, glutaryl-CoA and sarcosine dehydrogenase. It transfers the electrons to the main mitochondrial respiratory chain via ETF-ubiquinone oxidoreductase (ETF dehydrogenase). Required for normal mitochondrial fatty acid oxidation and normal amino acid metabolism. The polypeptide is Electron transfer flavoprotein subunit alpha, mitochondrial (ETFA) (Macaca fascicularis (Crab-eating macaque)).